The primary structure comprises 61 residues: MAKKSLKVKQSRPNKFSVRDYTRCLRCGRARAVLSHFGVCRLCFRELAYAGAIPGVKKASW.

Positions 24, 27, 40, and 43 each coordinate Zn(2+).

Belongs to the universal ribosomal protein uS14 family. Zinc-binding uS14 subfamily. In terms of assembly, part of the 30S ribosomal subunit. Contacts proteins S3 and S10. Zn(2+) serves as cofactor.

In terms of biological role, binds 16S rRNA, required for the assembly of 30S particles and may also be responsible for determining the conformation of the 16S rRNA at the A site. The polypeptide is Small ribosomal subunit protein uS14 (Mycoplasma genitalium (strain ATCC 33530 / DSM 19775 / NCTC 10195 / G37) (Mycoplasmoides genitalium)).